A 303-amino-acid polypeptide reads, in one-letter code: Tumor necrosis factor receptor type 1-associated DEATH domain protein (303 aa).

Residues 141 to 157 (QKDDELAEIDERLKSIK) carry the Nuclear export signal motif. Positions 208–298 (TSAHIQHFAK…SIALDLLSLN (91 aa)) constitute a Death domain. A Nuclear localization signal motif is present at residues 224-237 (KPVGRSLGKTCRAL).

In terms of assembly, heterodimer with tnfrsf1a.

It localises to the nucleus. It is found in the cytoplasm. The protein resides in the cytoskeleton. Functionally, adapter molecule for tnfrsf1a that specifically associates with the cytoplasmic domain of activated tnfrsf1a mediating its interaction with fadd. The polypeptide is Tumor necrosis factor receptor type 1-associated DEATH domain protein (Xenopus laevis (African clawed frog)).